Reading from the N-terminus, the 367-residue chain is GTP cyclohydrolase FolE2 (367 aa).

This sequence belongs to the GTP cyclohydrolase IV family.

The catalysed reaction is GTP + H2O = 7,8-dihydroneopterin 3'-triphosphate + formate + H(+). It participates in cofactor biosynthesis; 7,8-dihydroneopterin triphosphate biosynthesis; 7,8-dihydroneopterin triphosphate from GTP: step 1/1. In terms of biological role, converts GTP to 7,8-dihydroneopterin triphosphate. This Roseobacter denitrificans (strain ATCC 33942 / OCh 114) (Erythrobacter sp. (strain OCh 114)) protein is GTP cyclohydrolase FolE2.